The chain runs to 330 residues: ADP-L-glycero-D-manno-heptose-6-epimerase (330 aa).

Residues 11-12, 32-33, Lys-39, Lys-54, 75-79, and Asn-92 each bind NADP(+); these read FI, DN, and EGACS. Tyr-139 acts as the Proton acceptor in catalysis. Position 143 (Lys-143) interacts with NADP(+). Substrate is bound at residue Asn-168. Residues Val-169 and Lys-177 each contribute to the NADP(+) site. The active-site Proton acceptor is Lys-177. Substrate is bound by residues Arg-179, His-186, 200-203, Arg-213, and Tyr-292; that span reads FGEY.

It belongs to the NAD(P)-dependent epimerase/dehydratase family. HldD subfamily. As to quaternary structure, homopentamer. It depends on NADP(+) as a cofactor.

The catalysed reaction is ADP-D-glycero-beta-D-manno-heptose = ADP-L-glycero-beta-D-manno-heptose. Its pathway is nucleotide-sugar biosynthesis; ADP-L-glycero-beta-D-manno-heptose biosynthesis; ADP-L-glycero-beta-D-manno-heptose from D-glycero-beta-D-manno-heptose 7-phosphate: step 4/4. In terms of biological role, catalyzes the interconversion between ADP-D-glycero-beta-D-manno-heptose and ADP-L-glycero-beta-D-manno-heptose via an epimerization at carbon 6 of the heptose. The polypeptide is ADP-L-glycero-D-manno-heptose-6-epimerase (Burkholderia pseudomallei (strain 1026b)).